We begin with the raw amino-acid sequence, 115 residues long: MKFVLLFGVLLVALFSYSSAEMLDDFGQADEDELLSLIEKEEARAKECTPRFYDCSHDRHSCCRSELFKDVCTCFYPEGGDNEVCTCQQPKHLKYMEKAAGKAKKFGGKIKKWFG.

An N-terminal signal peptide occupies residues 1–20 (MKFVLLFGVLLVALFSYSSA). The propeptide occupies 21 to 44 (EMLDDFGQADEDELLSLIEKEEAR). Disulfide bonds link cysteine 48–cysteine 63, cysteine 55–cysteine 72, cysteine 62–cysteine 87, and cysteine 74–cysteine 85.

This sequence belongs to the neurotoxin 19 (CSTX) family. 01 subfamily. Expressed by the venom gland.

The protein resides in the secreted. This is U3-lycotoxin-Ls1k from Lycosa singoriensis (Wolf spider).